Consider the following 475-residue polypeptide: Protein translocase subunit SecD (475 aa).

The next 6 membrane-spanning stretches (helical) occupy residues 7-27, 313-333, 338-358, 364-384, 410-430, and 437-457; these read LLITVTLLAFSVWALWPSLKF, KGFMSSLIGIVLVFLFMFIYY, LIADVALSLNLIILMAIMAYL, LPGVAGIALTLAMSVDANVLI, FWTIFDANFTTLIAALFLFQF, and GFAVTLSIGLIVSMFTAVTVT.

The protein belongs to the SecD/SecF family. SecD subfamily. In terms of assembly, forms a complex with SecF. Part of the essential Sec protein translocation apparatus which comprises SecA, SecYEG and auxiliary proteins SecDF. Other proteins may also be involved.

Its subcellular location is the cell inner membrane. Its function is as follows. Part of the Sec protein translocase complex. Interacts with the SecYEG preprotein conducting channel. SecDF uses the proton motive force (PMF) to complete protein translocation after the ATP-dependent function of SecA. The polypeptide is Protein translocase subunit SecD (Endomicrobium trichonymphae).